Consider the following 660-residue polypeptide: Bifunctional polymyxin resistance protein ArnA (660 aa).

The tract at residues 1-304 (MKTVVFAYHD…TLGLVQGSRL (304 aa)) is formyltransferase ArnAFT. Residue 86-88 (HLI) participates in (6R)-10-formyltetrahydrofolate binding. The active-site Proton donor; for formyltransferase activity is the H104. Residues R114 and 136–140 (VKRAD) contribute to the (6R)-10-formyltetrahydrofolate site. Residues 314–660 (RRTRVLILGV…RTVDLTDKPS (347 aa)) are dehydrogenase ArnADH. Residues D347 and 368 to 369 (DI) contribute to the NAD(+) site. UDP-alpha-D-glucuronate contacts are provided by residues A393, Y398, and 432–433 (TS). The active-site Proton acceptor; for decarboxylase activity is E434. Residues R460, N492, 526–535 (KLIDGGKQKR), and Y613 contribute to the UDP-alpha-D-glucuronate site. The Proton donor; for decarboxylase activity role is filled by R619.

This sequence in the N-terminal section; belongs to the Fmt family. UDP-L-Ara4N formyltransferase subfamily. In the C-terminal section; belongs to the NAD(P)-dependent epimerase/dehydratase family. UDP-glucuronic acid decarboxylase subfamily. Homohexamer, formed by a dimer of trimers.

It catalyses the reaction UDP-alpha-D-glucuronate + NAD(+) = UDP-beta-L-threo-pentopyranos-4-ulose + CO2 + NADH. The enzyme catalyses UDP-4-amino-4-deoxy-beta-L-arabinose + (6R)-10-formyltetrahydrofolate = UDP-4-deoxy-4-formamido-beta-L-arabinose + (6S)-5,6,7,8-tetrahydrofolate + H(+). The protein operates within nucleotide-sugar biosynthesis; UDP-4-deoxy-4-formamido-beta-L-arabinose biosynthesis; UDP-4-deoxy-4-formamido-beta-L-arabinose from UDP-alpha-D-glucuronate: step 1/3. Its pathway is nucleotide-sugar biosynthesis; UDP-4-deoxy-4-formamido-beta-L-arabinose biosynthesis; UDP-4-deoxy-4-formamido-beta-L-arabinose from UDP-alpha-D-glucuronate: step 3/3. It participates in bacterial outer membrane biogenesis; lipopolysaccharide biosynthesis. Its function is as follows. Bifunctional enzyme that catalyzes the oxidative decarboxylation of UDP-glucuronic acid (UDP-GlcUA) to UDP-4-keto-arabinose (UDP-Ara4O) and the addition of a formyl group to UDP-4-amino-4-deoxy-L-arabinose (UDP-L-Ara4N) to form UDP-L-4-formamido-arabinose (UDP-L-Ara4FN). The modified arabinose is attached to lipid A and is required for resistance to polymyxin and cationic antimicrobial peptides. The protein is Bifunctional polymyxin resistance protein ArnA of Escherichia coli O17:K52:H18 (strain UMN026 / ExPEC).